The primary structure comprises 243 residues: Pyridoxine 5'-phosphate synthase (243 aa).

Asn-7 is a 3-amino-2-oxopropyl phosphate binding site. 9-10 (DH) is a binding site for 1-deoxy-D-xylulose 5-phosphate. Residue Arg-18 participates in 3-amino-2-oxopropyl phosphate binding. His-43 (proton acceptor) is an active-site residue. 1-deoxy-D-xylulose 5-phosphate-binding residues include Arg-45 and His-50. Glu-70 (proton acceptor) is an active-site residue. Thr-100 provides a ligand contact to 1-deoxy-D-xylulose 5-phosphate. Residue His-190 is the Proton donor of the active site. Residues Gly-191 and 212–213 (GH) contribute to the 3-amino-2-oxopropyl phosphate site.

Belongs to the PNP synthase family. In terms of assembly, homooctamer; tetramer of dimers.

The protein resides in the cytoplasm. The catalysed reaction is 3-amino-2-oxopropyl phosphate + 1-deoxy-D-xylulose 5-phosphate = pyridoxine 5'-phosphate + phosphate + 2 H2O + H(+). It functions in the pathway cofactor biosynthesis; pyridoxine 5'-phosphate biosynthesis; pyridoxine 5'-phosphate from D-erythrose 4-phosphate: step 5/5. Functionally, catalyzes the complicated ring closure reaction between the two acyclic compounds 1-deoxy-D-xylulose-5-phosphate (DXP) and 3-amino-2-oxopropyl phosphate (1-amino-acetone-3-phosphate or AAP) to form pyridoxine 5'-phosphate (PNP) and inorganic phosphate. This is Pyridoxine 5'-phosphate synthase from Prochlorococcus marinus (strain MIT 9211).